We begin with the raw amino-acid sequence, 372 residues long: Flagellar P-ring protein (372 aa).

Residues 1–25 form the signal peptide; that stretch reads MSKKILFLIKVIVFIFTTFSLPLYA.

The protein belongs to the FlgI family. The basal body constitutes a major portion of the flagellar organelle and consists of four rings (L,P,S, and M) mounted on a central rod.

It is found in the bacterial flagellum basal body. Assembles around the rod to form the L-ring and probably protects the motor/basal body from shearing forces during rotation. This Buchnera aphidicola subsp. Acyrthosiphon pisum (strain APS) (Acyrthosiphon pisum symbiotic bacterium) protein is Flagellar P-ring protein (flgI).